The chain runs to 73 residues: Small ribosomal subunit protein bS18c (73 aa).

This sequence belongs to the bacterial ribosomal protein bS18 family. Part of the 30S ribosomal subunit.

The protein localises to the plastid. Its subcellular location is the chloroplast. The chain is Small ribosomal subunit protein bS18c (rps18) from Guillardia theta (Cryptophyte).